The following is a 522-amino-acid chain: Nuclear pore glycoprotein p62 (522 aa).

N-acetylserine is present on S2. 5 consecutive repeat copies span residues 6-7, 44-45, 76-77, 114-115, and 142-143. Residues 6–143 form a 5 X 2 AA repeats of F-G region; it reads FGGTGAPTGG…GTAPTGFVFG (138 aa). A compositionally biased stretch (polar residues) spans 169–179; it reads SGFNIGSAGNS. Disordered stretches follow at residues 169–215 and 260–288; these read SGFN…ATIT and APGA…SSTT. 2 stretches are compositionally biased toward low complexity: residues 180–215 and 262–288; these read AQPT…ATIT and GAAS…SSTT. The segment at 328–458 is required for centrosome localization; it reads MTYAQLESLI…QDLKDIIEHL (131 aa). Residues 328-458 adopt a coiled-coil conformation; that stretch reads MTYAQLESLI…QDLKDIIEHL (131 aa). The O-linked (GlcNAc) threonine glycan is linked to T373. Phosphoserine is present on residues S408 and S418. An O-linked (GlcNAc) serine glycan is attached at S468.

This sequence belongs to the nucleoporin NSP1/NUP62 family. Component of the p62 complex, a complex at least composed of NUP62, NUP54, and NUP58. Interacts with NUP88. Interacts with NUTF2. Interacts with HIKESHI. Interacts with OSBPL8. Interacts with CAPG. Interacts with SAS6 and TUBG1 at the centrosome. Interacts with MCM3AP isoform GANP. As to quaternary structure, (Microbial infection) Interacts with Epstein-barr virus BGLF4; this interaction allows BGLF4 nuclear entry. In terms of processing, O-glycosylated. Contains about 10 N-acetylglucosamine side chain sites predicted for the entire protein, among which only one in the C-terminal. The inner channel of the NPC has a different redox environment from the cytoplasm and allows the formation of interchain disulfide bonds between some nucleoporins, the significant increase of these linkages upon oxidative stress reduces the permeability of the NPC.

The protein resides in the nucleus. The protein localises to the nuclear pore complex. It is found in the cytoplasm. It localises to the cytoskeleton. Its subcellular location is the spindle pole. The protein resides in the nucleus envelope. The protein localises to the microtubule organizing center. It is found in the centrosome. Functionally, essential component of the nuclear pore complex. The N-terminal is probably involved in nucleocytoplasmic transport. The C-terminal is involved in protein-protein interaction probably via coiled-coil formation, promotes its association with centrosomes and may function in anchorage of p62 to the pore complex. Plays a role in mitotic cell cycle progression by regulating centrosome segregation, centriole maturation and spindle orientation. It might be involved in protein recruitment to the centrosome after nuclear breakdown. This chain is Nuclear pore glycoprotein p62 (NUP62), found in Homo sapiens (Human).